Reading from the N-terminus, the 211-residue chain is Large ribosomal subunit protein eL13 (211 aa).

K16 is modified (N6-acetyllysine). A phosphoserine mark is found at S52 and S77. Residues K123 and K145 each participate in a glycyl lysine isopeptide (Lys-Gly) (interchain with G-Cter in SUMO2) cross-link. Residue K174 forms a Glycyl lysine isopeptide (Lys-Gly) (interchain with G-Cter in SUMO1); alternate linkage. Glycyl lysine isopeptide (Lys-Gly) (interchain with G-Cter in SUMO2); alternate cross-links involve residues K174 and K177. Residue K177 is modified to N6-acetyllysine; alternate.

Belongs to the eukaryotic ribosomal protein eL13 family. Component of the 60S large ribosomal subunit (LSU).

Its subcellular location is the cytoplasm. Component of the ribosome, a large ribonucleoprotein complex responsible for the synthesis of proteins in the cell. The small ribosomal subunit (SSU) binds messenger RNAs (mRNAs) and translates the encoded message by selecting cognate aminoacyl-transfer RNA (tRNA) molecules. The large subunit (LSU) contains the ribosomal catalytic site termed the peptidyl transferase center (PTC), which catalyzes the formation of peptide bonds, thereby polymerizing the amino acids delivered by tRNAs into a polypeptide chain. The nascent polypeptides leave the ribosome through a tunnel in the LSU and interact with protein factors that function in enzymatic processing, targeting, and the membrane insertion of nascent chains at the exit of the ribosomal tunnel. As part of the LSU, it is probably required for its formation and the maturation of rRNAs. Plays a role in bone development. The chain is Large ribosomal subunit protein eL13 (RPL13) from Bos taurus (Bovine).